Consider the following 409-residue polypeptide: NADH-ubiquinone oxidoreductase chain 4 (409 aa).

Helical transmembrane passes span 10–30 (LWLF…FLIF), 44–64 (SYSF…IVIS), 76–96 (ILVF…LYMF), 98–118 (ELSM…IEKI), 120–140 (SSYY…FVYF), 160–180 (FFIL…HLWL), 194–214 (LLAG…LGSL), 221–241 (VWIL…VFQS), 245–265 (ALAA…LVFI), 271–291 (ISSV…FYLI), 305–325 (FMSS…VVFL), 353–373 (MFVM…FLIT), and 389–409 (VGFS…SVFY).

It belongs to the complex I subunit 4 family.

It localises to the mitochondrion membrane. The enzyme catalyses a ubiquinone + NADH + 5 H(+)(in) = a ubiquinol + NAD(+) + 4 H(+)(out). Core subunit of the mitochondrial membrane respiratory chain NADH dehydrogenase (Complex I) that is believed to belong to the minimal assembly required for catalysis. Complex I functions in the transfer of electrons from NADH to the respiratory chain. The immediate electron acceptor for the enzyme is believed to be ubiquinone. The protein is NADH-ubiquinone oxidoreductase chain 4 of Caenorhabditis elegans.